A 342-amino-acid polypeptide reads, in one-letter code: Phosphate acyltransferase (342 aa).

This sequence belongs to the PlsX family. Homodimer. Probably interacts with PlsY.

The protein localises to the cytoplasm. It catalyses the reaction a fatty acyl-[ACP] + phosphate = an acyl phosphate + holo-[ACP]. Its pathway is lipid metabolism; phospholipid metabolism. Its function is as follows. Catalyzes the reversible formation of acyl-phosphate (acyl-PO(4)) from acyl-[acyl-carrier-protein] (acyl-ACP). This enzyme utilizes acyl-ACP as fatty acyl donor, but not acyl-CoA. The sequence is that of Phosphate acyltransferase from Actinobacillus succinogenes (strain ATCC 55618 / DSM 22257 / CCUG 43843 / 130Z).